The sequence spans 1621 residues: Cilia- and flagella-associated protein 43 (1621 aa).

8 WD repeats span residues 97-138 (GAQL…PLCS), 141-180 (DSQT…NQYQ), 293-330 (LLEG…VKLE), 334-373 (NAQE…ETYK), 377-417 (VYSR…SVSS), 464-503 (LYCV…SFQV), 634-673 (GSQL…TMAQ), and 679-721 (YHNG…SSRL). Coiled coils occupy residues 792 to 812 (IKRK…AEKE), 850 to 870 (TEEQ…VRQE), 1026 to 1046 (CRQK…IQEI), 1098 to 1118 (VEEA…ALDD), 1150 to 1177 (TEEE…YSKE), 1362 to 1389 (DEKM…FQLD), 1451 to 1514 (IFQL…QEKQ), and 1591 to 1611 (AKIQ…LRMK).

This sequence belongs to the CFAP43 family.

The protein localises to the cytoplasm. It localises to the cytoskeleton. The protein resides in the cilium axoneme. In terms of biological role, involved in the regulation of the beating frequency of motile cilia in multiciliated cells of the larval epidermis. This Xenopus laevis (African clawed frog) protein is Cilia- and flagella-associated protein 43 (cfap43).